The chain runs to 119 residues: uncharacterized protein (119 aa).

This is an uncharacterized protein from Bos taurus (Bovine).